The primary structure comprises 137 residues: Profilin-3 (137 aa).

The protein belongs to the profilin family. As to quaternary structure, interacts with ACTRT3. Detected in round spermatids.

The protein resides in the cytoplasm. Its subcellular location is the cytoskeleton. It is found in the nucleus. Its function is as follows. Binds to actin and affects the structure of the cytoskeleton. Slightly reduces actin polymerization. Binds to poly-L-proline, phosphatidylinositol 3-phosphate (PtdIns(3)P), phosphatidylinositol 4,5-bisphosphate (PtdIns(4,5)P2), and phosphatidylinositol 4-phosphate (PtdIns(4)P). May be involved in spermatogenesis. The polypeptide is Profilin-3 (Pfn3) (Rattus norvegicus (Rat)).